A 377-amino-acid chain; its full sequence is D-alanine--D-alanine ligase (377 aa).

Residues 141–347 (KRILNQAGIR…YSELIDRLIQ (207 aa)) form the ATP-grasp domain. 171–226 (KEELGDLVFVKPAKQGSSVGIHKVDTEEEYETAMKDAFTYDYKVLVEAGIKNPREI) is a binding site for ATP. Mg(2+)-binding residues include Asp301, Glu314, and Asn316.

This sequence belongs to the D-alanine--D-alanine ligase family. The cofactor is Mg(2+). Mn(2+) serves as cofactor.

It localises to the cytoplasm. The enzyme catalyses 2 D-alanine + ATP = D-alanyl-D-alanine + ADP + phosphate + H(+). Its pathway is cell wall biogenesis; peptidoglycan biosynthesis. Functionally, cell wall formation. The polypeptide is D-alanine--D-alanine ligase (Limosilactobacillus fermentum (strain NBRC 3956 / LMG 18251) (Lactobacillus fermentum)).